The primary structure comprises 293 residues: Peptidoglycan deacetylase (293 aa).

The Zn(2+) site is built by Asp14, His86, and His90. Residues 29 to 276 (PDDISRGLFA…INKHEGVRWV (248 aa)) enclose the NodB homology domain.

Belongs to the polysaccharide deacetylase family. As to quaternary structure, homotetramer.

The enzyme catalyses Deacetylation of xylans and xylo-oligosaccharides.. Its function is as follows. Catalyzes the N-deacetylation of peptidoglycan (PG), an important mechanism that appears to confer lysozyme resistance and to mitigate host immune detection; this likely contributes to pathogen persistence in the host. The exact nature of the residue in PG that is deacetylated has not been determined. Is also able to catalyze the deacetylation of acetylated xylan, and, to a lesser extent, that of chitin and chitosan. Therefore, this enzyme might play a role during infection, considering that xylan-containing carbohydrate structures are among those commonly consumed by humans. The chain is Peptidoglycan deacetylase (pgdA) from Helicobacter pylori (strain ATCC 700392 / 26695) (Campylobacter pylori).